Reading from the N-terminus, the 348-residue chain is Outer membrane protein A (348 aa).

The N-terminal stretch at 1–21 (MKKTAIAIAVALAGFATVAQA) is a signal peptide. Transmembrane regions (beta stranded) follow at residues 27–37 (TWYTGAKLGWS), 55–66 (QLGAGAFGGYQV), 70–78 (VGFEMGYDW), 96–107 (QGVQLTAKLGYP), 112–120 (LDIYTRLGG), 146–155 (PVFAGGVEYA), 160–167 (IATRLEYQ), and 186–194 (LLSLGVSYR). Positions 201 to 210 (APVVAPAPAP) are hinge-like. 3 consecutive repeat copies span residues 205–206 (AP), 207–208 (AP), and 209–210 (AP). Residues 205–210 (APAPAP) are 3 X 2 AA tandem repeats of A-P. The OmpA-like domain maps to 212-340 (VQTKHFTLKS…RVEIEVKGIK (129 aa)). A disulfide bridge links Cys313 with Cys325.

It belongs to the outer membrane OOP (TC 1.B.6) superfamily. OmpA family. As to quaternary structure, monomer and homodimer. (Microbial infection) Upon infection with phage Sf6 associates with the mature bacteriophage capsid. Was originally suggested to be within the bacteriophage capsid. This has been disproven.

Its subcellular location is the extracellular vesicle. It is found in the cell outer membrane. Its function is as follows. With TolR probably plays a role in maintaining the position of the peptidoglycan cell wall in the periplasm. Acts as a porin with low permeability that allows slow penetration of small solutes; an internal gate slows down solute passage. In terms of biological role, required for conjugation with F-type plasmids; probably serves as the mating receptor on recipient cells. Functionally, (Microbial infection) Serves as a secondary receptor during phage Sf6 infection; infection requires both lipopolysaccharide (LPS) and the OmpA beta-barrel. In Shigella flexneri, this protein is Outer membrane protein A.